Consider the following 331-residue polypeptide: uncharacterized protein (331 aa).

Pentapeptide repeat domains follow at residues 20-59, 60-99, 100-139, 151-190, 191-230, 231-270, and 271-310; these read LKLP…NLGQ, ANLV…ILRD, SDMT…NMRQ, AILG…DLRK, ADLS…KISE, AEMT…DLSR, and ANLT…DLMS.

This is an uncharacterized protein from Synechocystis sp. (strain ATCC 27184 / PCC 6803 / Kazusa).